An 85-amino-acid chain; its full sequence is Large ribosomal subunit protein bL27 (85 aa).

A disordered region spans residues 1–21; sequence MAHKKAGGSTRNGRDSRGKRL.

The protein belongs to the bacterial ribosomal protein bL27 family.

The chain is Large ribosomal subunit protein bL27 from Blochmanniella floridana.